We begin with the raw amino-acid sequence, 97 residues long: Citrate lyase acyl carrier protein (97 aa).

Serine 14 carries the post-translational modification O-(phosphoribosyl dephospho-coenzyme A)serine.

The protein belongs to the CitD family. Oligomer with a subunit composition of (alpha,beta,gamma)6.

The protein resides in the cytoplasm. Covalent carrier of the coenzyme of citrate lyase. This chain is Citrate lyase acyl carrier protein, found in Lactobacillus acidophilus (strain ATCC 700396 / NCK56 / N2 / NCFM).